Reading from the N-terminus, the 284-residue chain is Deoxyribonuclease-1 (284 aa).

The first 22 residues, 1 to 22 (MRGARLMGALLALAGLLQGALA), serve as a signal peptide directing secretion. An N-linked (GlcNAc...) asparagine glycan is attached at asparagine 40. Residue glutamate 100 is part of the active site. Cysteine 123 and cysteine 126 are disulfide-bonded. N-linked (GlcNAc...) asparagine glycosylation is present at asparagine 128. Histidine 156 is an active-site residue. A disulfide bond links cysteine 195 and cysteine 231.

It belongs to the DNase I family. The cofactor is Ca(2+). It depends on Mg(2+) as a cofactor. As to expression, highest expression in pancreas.

The protein resides in the secreted. It is found in the zymogen granule. The protein localises to the nucleus envelope. The enzyme catalyses Endonucleolytic cleavage to 5'-phosphodinucleotide and 5'-phosphooligonucleotide end-products.. In terms of biological role, serum endocuclease secreted into body fluids by a wide variety of exocrine and endocrine organs. Expressed by non-hematopoietic tissues and preferentially cleaves protein-free DNA. Among other functions, seems to be involved in cell death by apoptosis. Binds specifically to G-actin and blocks actin polymerization. Together with DNASE1L3, plays a key role in degrading neutrophil extracellular traps (NETs). NETs are mainly composed of DNA fibers and are released by neutrophils to bind pathogens during inflammation. Degradation of intravascular NETs by DNASE1 and DNASE1L3 is required to prevent formation of clots that obstruct blood vessels and cause organ damage following inflammation. This Canis lupus familiaris (Dog) protein is Deoxyribonuclease-1 (DNASE1).